The sequence spans 351 residues: Hydroxymethylglutaryl-CoA synthase (351 aa).

Aspartate 28 contacts (3S)-3-hydroxy-3-methylglutaryl-CoA. Residue glutamate 80 is the Proton donor/acceptor of the active site. (3S)-3-hydroxy-3-methylglutaryl-CoA contacts are provided by cysteine 112 and threonine 153. Catalysis depends on cysteine 112, which acts as the Acyl-thioester intermediate. CoA is bound at residue arginine 199. Residues threonine 201 and histidine 234 each contribute to the (3S)-3-hydroxy-3-methylglutaryl-CoA site. The active-site Proton donor/acceptor is histidine 234. Lysine 239 serves as a coordination point for CoA. Residues arginine 243, asparagine 266, and serine 296 each coordinate (3S)-3-hydroxy-3-methylglutaryl-CoA.

Belongs to the thiolase-like superfamily. Archaeal HMG-CoA synthase family. As to quaternary structure, interacts with acetoacetyl-CoA thiolase that catalyzes the precedent step in the pathway and with a DUF35 protein. The acetoacetyl-CoA thiolase/HMG-CoA synthase complex channels the intermediate via a fused CoA-binding site, which allows for efficient coupling of the endergonic thiolase reaction with the exergonic HMGCS reaction.

The enzyme catalyses acetoacetyl-CoA + acetyl-CoA + H2O = (3S)-3-hydroxy-3-methylglutaryl-CoA + CoA + H(+). Its pathway is metabolic intermediate biosynthesis; (R)-mevalonate biosynthesis; (R)-mevalonate from acetyl-CoA: step 2/3. Functionally, catalyzes the condensation of acetyl-CoA with acetoacetyl-CoA to form 3-hydroxy-3-methylglutaryl-CoA (HMG-CoA). Functions in the mevalonate (MVA) pathway leading to isopentenyl diphosphate (IPP), a key precursor for the biosynthesis of isoprenoid compounds that are building blocks of archaeal membrane lipids. The chain is Hydroxymethylglutaryl-CoA synthase from Picrophilus torridus (strain ATCC 700027 / DSM 9790 / JCM 10055 / NBRC 100828 / KAW 2/3).